The following is a 427-amino-acid chain: Vitamin D3 receptor (427 aa).

A DNA-binding region (nuclear receptor) is located at residues 21-96 (PRICGVCGDR…IGMMKEFILT (76 aa)). Residues C24, C27, C41, C44, C60, C66, C76, and C79 each coordinate Zn(2+). NR C4-type zinc fingers lie at residues 24–44 (CGVC…CEGC) and 60–79 (CPFN…CQAC). Residues 97–126 (DEEVQRKREMILKRKEEEALKDSLRPKLSE) are hinge. The NR LBD domain maps to 127–423 (EQQRIIAILL…LTPLVLEVFG (297 aa)). Y143 is a binding site for calcitriol. Positions 149 to 201 (DFGQFRPPVRGDEEEGTLPSRSSSAHAPSFSGSSSSSCSDQYTSSPDTMEPAS) are disordered. The span at 168–193 (SRSSSAHAPSFSGSSSSSCSDQYTSS) shows a compositional bias: low complexity. S237 provides a ligand contact to calcitriol. The segment at 246–264 (KMIPGFRDLTAEDQIVLLK) is interaction with coactivator LXXLL motif. Calcitriol contacts are provided by R274, S278, H305, and H397. The 9aaTAD motif lies at 416-424 (PLVLEVFGN).

Belongs to the nuclear hormone receptor family. NR1 subfamily. As to quaternary structure, homodimer in the absence of bound vitamin D3. Heterodimer with RXRA after vitamin D3 binding. Interacts with MED1, NCOA1, NCOA2, NCOA3 and NCOA6 coactivators, leading to a strong increase of transcription of target genes. Interacts with the corepressor NCOR1. Interacts with SNW1. Interacts with IRX4, the interaction does not affect its transactivation activity. Interacts with CRY1. Interacts with CRY2 in a ligand-dependent manner. Ubiquitinated by UBR5, leading to its degradation: UBR5 specifically recognizes and binds ligand-bound VDR when it is not associated with coactivators (NCOAs). In presence of NCOAs, the UBR5-degron is not accessible, preventing its ubiquitination and degradation.

Its subcellular location is the nucleus. The protein resides in the cytoplasm. Functionally, nuclear receptor for calcitriol, the active form of vitamin D3 which mediates the action of this vitamin on cells. Enters the nucleus upon vitamin D3 binding where it forms heterodimers with the retinoid X receptor/RXR. The VDR-RXR heterodimers bind to specific response elements on DNA and activate the transcription of vitamin D3-responsive target genes. Plays a central role in calcium homeostasis. Also functions as a receptor for the secondary bile acid lithocholic acid (LCA) and its metabolites. The protein is Vitamin D3 receptor (VDR) of Sus scrofa (Pig).